A 289-amino-acid chain; its full sequence is Elongation factor Ts (289 aa).

The segment at 82 to 85 is involved in Mg(2+) ion dislocation from EF-Tu; that stretch reads TDFL.

This sequence belongs to the EF-Ts family.

It localises to the cytoplasm. In terms of biological role, associates with the EF-Tu.GDP complex and induces the exchange of GDP to GTP. It remains bound to the aminoacyl-tRNA.EF-Tu.GTP complex up to the GTP hydrolysis stage on the ribosome. The chain is Elongation factor Ts from Azotobacter vinelandii (strain DJ / ATCC BAA-1303).